Consider the following 180-residue polypeptide: ATP-dependent protease subunit HslV (180 aa).

The active site involves threonine 7. Residues glycine 165, cysteine 168, and threonine 171 each coordinate Na(+).

The protein belongs to the peptidase T1B family. HslV subfamily. In terms of assembly, a double ring-shaped homohexamer of HslV is capped on each side by a ring-shaped HslU homohexamer. The assembly of the HslU/HslV complex is dependent on binding of ATP.

Its subcellular location is the cytoplasm. It catalyses the reaction ATP-dependent cleavage of peptide bonds with broad specificity.. Its activity is regulated as follows. Allosterically activated by HslU binding. Protease subunit of a proteasome-like degradation complex believed to be a general protein degrading machinery. This chain is ATP-dependent protease subunit HslV, found in Bacillus cereus (strain G9842).